A 247-amino-acid polypeptide reads, in one-letter code: Small ribosomal subunit protein uS2 (247 aa).

Belongs to the universal ribosomal protein uS2 family.

The sequence is that of Small ribosomal subunit protein uS2 from Ectopseudomonas mendocina (strain ymp) (Pseudomonas mendocina).